Here is a 1040-residue protein sequence, read N- to C-terminus: Vitamin B12-dependent ribonucleotide reductase (1040 aa).

Substrate is bound by residues Ser-169, 213–214 (AC), Gly-242, 420–424 (NPCSE), and 604–608 (PTGTI). Cys-214 and Cys-433 form a disulfide bridge. The active-site Proton acceptor is Asn-420. Residue Cys-422 is the Cysteine radical intermediate of the active site. Glu-424 (proton acceptor) is an active-site residue. Disordered regions lie at residues 909 to 932 (SAEG…GATA) and 969 to 988 (GSAT…SDGA). The span at 969-979 (GSATNGHSNGQ) shows a compositional bias: polar residues.

It belongs to the ribonucleoside diphosphate reductase class-2 family. It depends on adenosylcob(III)alamin as a cofactor.

The catalysed reaction is a 2'-deoxyribonucleoside 5'-diphosphate + [thioredoxin]-disulfide + H2O = a ribonucleoside 5'-diphosphate + [thioredoxin]-dithiol. Its function is as follows. Catalyzes the reduction of ribonucleotides to deoxyribonucleotides. May function to provide a pool of deoxyribonucleotide precursors for DNA repair during oxygen limitation and/or for immediate growth after restoration of oxygen. The sequence is that of Vitamin B12-dependent ribonucleotide reductase (nrdJ) from Rhodopirellula baltica (strain DSM 10527 / NCIMB 13988 / SH1).